Consider the following 213-residue polypeptide: GTP-binding protein yptV4 (213 aa).

GTP is bound at residue 13–21 (GDTGVGKSC). Residues 35 to 43 (HDLTIGVEF) carry the Effector region motif. Residues 61–65 (DTAGQ), 119–122 (NKCD), and 149–151 (SAR) each bind GTP. Positions 194–213 (AGPQAAKPGEGDARKSSSCC) are disordered. Positions 202-213 (GEGDARKSSSCC) are enriched in basic and acidic residues. Residues C212 and C213 are each lipidated (S-geranylgeranyl cysteine).

Belongs to the small GTPase superfamily. Rab family.

The protein localises to the cell membrane. In terms of biological role, protein transport. Probably involved in vesicular traffic. This is GTP-binding protein yptV4 (YPTV4) from Volvox carteri (Green alga).